The chain runs to 701 residues: Pre-mRNA-splicing factor CLF1 (701 aa).

HAT repeat units lie at residues 43–75 (SYQQTKRKEFEQHINKNRLNLGQWTRYAKWEIE), 78–110 (HDFPRARSILERALDVNIQHVPFWIQYIQLELS), 112–144 (KNINHARNLMERAINTLPRVNKLWFLYVQTEEM), 146–177 (KNYPMVRAVFERWLDWHPDTSAWDAYINFEAR), 179–210 (EEKENVRTIFKKYVHEFPNAGTWYKWIKYEME), 214–253 (DDVNTVRAVFESAVDTLLSNKSEENDDDEEFATIISSWTS), 266–299 (EIFKLLLDNKTNKLEISDQTKSSIYTAFVEFEKN), 309–341 (SVLIKRRIKYEQEIQNDPYDYDSWWKYMTLLQN), 343–378 (SNKSDLENAFKKVTGNVVHDKHKSIKWRRYIMFWIW), 388–424 (NNPVSAREIWNNCLKVIPHKSFTFAKVWIGYSEFELR), 545–576 (MQYDKIREIYRALLDKDPNAHNWISFALFESS), and 601–642 (SQIE…VNGS).

Belongs to the crooked-neck family. As to quaternary structure, associated with the spliceosome.

The protein resides in the nucleus. Involved in pre-mRNA splicing and cell cycle progression. Required for the spliceosome assembly and initiation of the DNA replication. The polypeptide is Pre-mRNA-splicing factor CLF1 (CLF1) (Candida albicans (strain SC5314 / ATCC MYA-2876) (Yeast)).